A 133-amino-acid chain; its full sequence is Bacteriohemerythrin (133 aa).

7 residues coordinate Fe cation: His-19, His-56, Glu-60, His-75, His-79, His-115, and Asp-120.

This sequence belongs to the hemerythrin family. Monomer.

Functionally, oxygen-binding protein. May be involved in a storage mechanism or for delivery to oxygen-requiring enzymes. The oxygen-binding site contains two iron atoms. The sequence is that of Bacteriohemerythrin from Campylobacter jejuni subsp. jejuni serotype O:6 (strain 81116 / NCTC 11828).